Consider the following 344-residue polypeptide: Heat-inducible transcription repressor HrcA (344 aa).

This sequence belongs to the HrcA family.

Its function is as follows. Negative regulator of class I heat shock genes (grpE-dnaK-dnaJ and groELS operons). Prevents heat-shock induction of these operons. The sequence is that of Heat-inducible transcription repressor HrcA from Streptococcus pyogenes serotype M6 (strain ATCC BAA-946 / MGAS10394).